A 291-amino-acid chain; its full sequence is Mitochondrial fission factor (291 aa).

Over 1–271 the chain is Cytoplasmic; it reads MAEISRIQYE…ENKERAKREM (271 aa). Thr89 is modified (phosphothreonine). Residues 106-134 are disordered; that stretch reads LERPLPTPQSEESRAVGRLKRERSMSENA. 3 positions are modified to phosphoserine: Ser129, Ser131, and Ser146. Thr149 is modified (phosphothreonine). Residues Ser151, Ser178, Ser182, and Ser244 each carry the phosphoserine modification. The stretch at 240–271 forms a coiled coil; that stretch reads VDAASLRRQIIKLNRRLQLLEEENKERAKREM. Residues 272-289 traverse the membrane as a helical; Anchor for type IV membrane protein segment; the sequence is VMYSITVAFWLLNSWLWF. At 290 to 291 the chain is on the mitochondrial intermembrane side; it reads RR.

It belongs to the Tango11 family. Homodimer. Interacts with DNM1L. Interacts with C11orf65/MFI; the interaction inhibits MFF interaction with DNM1L.

It localises to the mitochondrion outer membrane. It is found in the peroxisome. The protein resides in the cytoplasmic vesicle. The protein localises to the secretory vesicle. Its subcellular location is the synaptic vesicle. Plays a role in mitochondrial and peroxisomal fission. Promotes the recruitment and association of the fission mediator dynamin-related protein 1 (DNM1L) to the mitochondrial surface. May be involved in regulation of synaptic vesicle membrane dynamics by recruitment of DNM1L to clathrin-containing vesicles. The chain is Mitochondrial fission factor (Mff) from Mus musculus (Mouse).